We begin with the raw amino-acid sequence, 345 residues long: Guanine nucleotide-binding protein G(i) subunit alpha-3 (345 aa).

One can recognise a G-alpha domain in the interval Lys-23–Tyr-345. The segment at Lys-26–Thr-39 is G1 motif. GTP-binding residues include Gly-33, Glu-34, Ser-35, Gly-36, Lys-37, Ser-38, Thr-39, Asp-141, Ser-142, Leu-166, Arg-167, Thr-168, Arg-169, Val-170, Lys-171, Thr-172, Val-192, Gly-194, Asn-260, Lys-261, Asp-263, Leu-264, Cys-316, Ala-317, and Thr-318. Position 38 (Ser-38) interacts with Mg(2+). Positions Asp-164–Thr-172 are G2 motif. Residue Thr-172 participates in Mg(2+) binding. The segment at Phe-187–Arg-196 is G3 motif. Positions Ile-256–Asp-263 are G4 motif. The tract at residues Thr-315–Thr-320 is G5 motif.

Belongs to the G-alpha family. G(i/o/t/z) subfamily. In terms of assembly, heterotrimeric G proteins are composed of 3 units; alpha, beta and gamma. The alpha subunit contains the guanine nucleotide binding site. GTP binding causes dissociation of the heterotrimer, liberating the individual subunits so that they can interact with downstream effector proteins.

The protein resides in the cytoplasm. It localises to the cell membrane. It is found in the cytoskeleton. The protein localises to the microtubule organizing center. Its subcellular location is the centrosome. The protein resides in the membrane. Its function is as follows. Heterotrimeric guanine nucleotide-binding proteins (G proteins) function as transducers downstream of G protein-coupled receptors (GPCRs) in numerous signaling cascades. The alpha chain contains the guanine nucleotide binding site and alternates between an active, GTP-bound state and an inactive, GDP-bound state. Signaling by an activated GPCR promotes GDP release and GTP binding. The alpha subunit has a low GTPase activity that converts bound GTP to GDP, thereby terminating the signal. Both GDP release and GTP hydrolysis are modulated by numerous regulatory proteins. Signaling is mediated via effector proteins, such as adenylate cyclase. Inhibits adenylate cyclase activity, leading to decreased intracellular cAMP levels. Stimulates the activity of receptor-regulated K(+) channels. The active GTP-bound form prevents the association of RGS14 with centrosomes and is required for the translocation of RGS14 from the cytoplasm to the plasma membrane. May play a role in cell division. The active GTP-bound form activates the calcium permeant TRPC5 ion channels. In Xenopus laevis (African clawed frog), this protein is Guanine nucleotide-binding protein G(i) subunit alpha-3 (gnai3).